A 267-amino-acid polypeptide reads, in one-letter code: MTQIHPTALVDPKAELASDVTVGPFSIVGPNVRIGSGTRVGSHTTVEGYTTIGEGNTIGPYASVGGVPQDMKYRNEPTRLEIGDRNTIREFTTIHTGTVQDRGLTSLGNDNWIMAYVHIAHDCTVGNHTVFSSNAQIAGHVEVGDWAILGGMSGVHQFVRIGAHAMLGGASALVQDVPPFVIAASDKSGNKATPHGVNVEGLRRRGFDAGQIAALRQAYKLLYKSDLSFDEARNEITALLGQSDAGTAAPLRAFVDFLAATQRGIVR.

Belongs to the transferase hexapeptide repeat family. LpxA subfamily. As to quaternary structure, homotrimer.

The protein localises to the cytoplasm. The enzyme catalyses a (3R)-hydroxyacyl-[ACP] + UDP-N-acetyl-alpha-D-glucosamine = a UDP-3-O-[(3R)-3-hydroxyacyl]-N-acetyl-alpha-D-glucosamine + holo-[ACP]. It functions in the pathway glycolipid biosynthesis; lipid IV(A) biosynthesis; lipid IV(A) from (3R)-3-hydroxytetradecanoyl-[acyl-carrier-protein] and UDP-N-acetyl-alpha-D-glucosamine: step 1/6. In terms of biological role, involved in the biosynthesis of lipid A, a phosphorylated glycolipid that anchors the lipopolysaccharide to the outer membrane of the cell. In Cupriavidus necator (strain ATCC 17699 / DSM 428 / KCTC 22496 / NCIMB 10442 / H16 / Stanier 337) (Ralstonia eutropha), this protein is Acyl-[acyl-carrier-protein]--UDP-N-acetylglucosamine O-acyltransferase.